Consider the following 171-residue polypeptide: Xanthine-guanine phosphoribosyltransferase (171 aa).

5-phospho-alpha-D-ribose 1-diphosphate contacts are provided by residues 51 to 52 (RG) and 106 to 114 (DDLVDSGKT). Asp-107 is a Mg(2+) binding site. Guanine is bound by residues Asp-110 and Ile-153. Residues Asp-110 and Ile-153 each contribute to the xanthine site. GMP contacts are provided by residues 110-114 (DSGKT) and 152-153 (WI).

The protein belongs to the purine/pyrimidine phosphoribosyltransferase family. XGPT subfamily. In terms of assembly, homotetramer. The cofactor is Mg(2+).

It is found in the cell inner membrane. The enzyme catalyses GMP + diphosphate = guanine + 5-phospho-alpha-D-ribose 1-diphosphate. The catalysed reaction is XMP + diphosphate = xanthine + 5-phospho-alpha-D-ribose 1-diphosphate. It carries out the reaction IMP + diphosphate = hypoxanthine + 5-phospho-alpha-D-ribose 1-diphosphate. It participates in purine metabolism; GMP biosynthesis via salvage pathway; GMP from guanine: step 1/1. Its pathway is purine metabolism; XMP biosynthesis via salvage pathway; XMP from xanthine: step 1/1. In terms of biological role, purine salvage pathway enzyme that catalyzes the transfer of the ribosyl-5-phosphate group from 5-phospho-alpha-D-ribose 1-diphosphate (PRPP) to the N9 position of the 6-oxopurines guanine and xanthine to form the corresponding ribonucleotides GMP (guanosine 5'-monophosphate) and XMP (xanthosine 5'-monophosphate), with the release of PPi. To a lesser extent, also acts on hypoxanthine. This chain is Xanthine-guanine phosphoribosyltransferase, found in Ruegeria pomeroyi (strain ATCC 700808 / DSM 15171 / DSS-3) (Silicibacter pomeroyi).